A 208-amino-acid polypeptide reads, in one-letter code: N-(5'-phosphoribosyl)anthranilate isomerase (208 aa).

This sequence belongs to the TrpF family.

It carries out the reaction N-(5-phospho-beta-D-ribosyl)anthranilate = 1-(2-carboxyphenylamino)-1-deoxy-D-ribulose 5-phosphate. Its pathway is amino-acid biosynthesis; L-tryptophan biosynthesis; L-tryptophan from chorismate: step 3/5. This is N-(5'-phosphoribosyl)anthranilate isomerase from Neisseria meningitidis serogroup B (strain ATCC BAA-335 / MC58).